The primary structure comprises 370 residues: Queuine tRNA-ribosyltransferase (370 aa).

D89 serves as the catalytic Proton acceptor. Residues 89–93 (DSGGF), D143, and G214 each bind substrate. Positions 245-251 (GVGKPED) are RNA binding. D264 functions as the Nucleophile in the catalytic mechanism. The RNA binding; important for wobble base 34 recognition stretch occupies residues 269-273 (TRNAR). Residues C302, C304, C307, and H333 each coordinate Zn(2+).

It belongs to the queuine tRNA-ribosyltransferase family. Homodimer. Within each dimer, one monomer is responsible for RNA recognition and catalysis, while the other monomer binds to the replacement base PreQ1. Zn(2+) serves as cofactor.

It carries out the reaction 7-aminomethyl-7-carbaguanine + guanosine(34) in tRNA = 7-aminomethyl-7-carbaguanosine(34) in tRNA + guanine. It functions in the pathway tRNA modification; tRNA-queuosine biosynthesis. In terms of biological role, catalyzes the base-exchange of a guanine (G) residue with the queuine precursor 7-aminomethyl-7-deazaguanine (PreQ1) at position 34 (anticodon wobble position) in tRNAs with GU(N) anticodons (tRNA-Asp, -Asn, -His and -Tyr). Catalysis occurs through a double-displacement mechanism. The nucleophile active site attacks the C1' of nucleotide 34 to detach the guanine base from the RNA, forming a covalent enzyme-RNA intermediate. The proton acceptor active site deprotonates the incoming PreQ1, allowing a nucleophilic attack on the C1' of the ribose to form the product. After dissociation, two additional enzymatic reactions on the tRNA convert PreQ1 to queuine (Q), resulting in the hypermodified nucleoside queuosine (7-(((4,5-cis-dihydroxy-2-cyclopenten-1-yl)amino)methyl)-7-deazaguanosine). This chain is Queuine tRNA-ribosyltransferase, found in Buchnera aphidicola subsp. Acyrthosiphon pisum (strain 5A).